A 986-amino-acid polypeptide reads, in one-letter code: LRR receptor-like serine/threonine-protein kinase ER2 (986 aa).

Positions 1 to 21 are cleaved as a signal peptide; sequence MTTTTTTRLLLAAILLAVAAA. The Extracellular segment spans residues 22 to 581; that stretch reads DDDGQTLLEI…VQRSSVSRSA (560 aa). 2 N-linked (GlcNAc...) asparagine glycosylation sites follow: Asn64 and Asn73. LRR repeat units lie at residues 68–89, 90–114, 116–138, 139–161, 162–186, 188–210, 211–233, 234–259, 261–280, 281–304, 306–329, 330–352, 354–377, 379–401, 402–425, 427–449, 450–472, 473–498, 500–520, and 521–545; these read AVAA…AIGN, LKSV…IGDC, SLKT…ISKL, KHLE…TLSQ, LPNL…IYWN, VLQY…MCQL, TGLW…TIGN, CTSF…GFLQ, ATLS…VIGL, MQAL…ILGN, TYTE…LGNM, STLH…ELGK, TGLF…ISSC, NLIS…LHKL, ESIT…LAKM, NLDT…IGSL, EHLL…EFGN, LRSI…GMLQ, LILL…LINC, and FSLN…NFSR. N-linked (GlcNAc...) asparagine glycosylation is found at Asn220 and Asn233. Asn269, Asn304, and Asn328 each carry an N-linked (GlcNAc...) asparagine glycan. N-linked (GlcNAc...) asparagine glycans are attached at residues Asn373, Asn391, and Asn408. An N-linked (GlcNAc...) asparagine glycan is attached at Asn456. 3 N-linked (GlcNAc...) asparagine glycosylation sites follow: Asn509, Asn527, and Asn542. The chain crosses the membrane as a helical span at residues 582–602; that stretch reads ILGIAVAGLVILLMILAAACW. Over 603–986 the chain is Cytoplasmic; it reads PHWAQVPKDV…FGEVISQNTE (384 aa). A Protein kinase domain is found at 653-934; that stretch reads LSEKYIIGYG…YPDPPSKPAL (282 aa). ATP-binding positions include 659–667 and Lys681; that span reads IGYGASSTV. Catalysis depends on Asp779, which acts as the Proton acceptor.

This sequence belongs to the protein kinase superfamily. Ser/Thr protein kinase family.

Its subcellular location is the cell membrane. The enzyme catalyses L-seryl-[protein] + ATP = O-phospho-L-seryl-[protein] + ADP + H(+). The catalysed reaction is L-threonyl-[protein] + ATP = O-phospho-L-threonyl-[protein] + ADP + H(+). Functionally, receptor kinase that may be involved in the regulation of cell proliferation and cell growth. The chain is LRR receptor-like serine/threonine-protein kinase ER2 from Oryza sativa subsp. japonica (Rice).